The following is a 352-amino-acid chain: Ion-translocating oxidoreductase complex subunit D (352 aa).

The next 4 helical transmembrane spans lie at Ile20–Gly40, Gly42–Leu62, Ile89–Ala109, and Pro123–Leu143. Position 187 is an FMN phosphoryl threonine (Thr187). 5 helical membrane passes run Leu215 to Leu235, Trp242 to Phe262, Leu267 to Leu287, Leu301 to Pro321, and Asp322 to Thr342.

The protein belongs to the NqrB/RnfD family. The complex is composed of six subunits: RsxA, RsxB, RsxC, RsxD, RsxE and RsxG. It depends on FMN as a cofactor.

It localises to the cell inner membrane. Part of a membrane-bound complex that couples electron transfer with translocation of ions across the membrane. Required to maintain the reduced state of SoxR. In Escherichia coli O7:K1 (strain IAI39 / ExPEC), this protein is Ion-translocating oxidoreductase complex subunit D.